The primary structure comprises 406 residues: Odorant receptor 42a (406 aa).

The Cytoplasmic portion of the chain corresponds to 1–44 (MDLRRWFPTLYTQSKDSPVRSRDATLYLLRCVFLMGVRKPPAKF). The chain crosses the membrane as a helical span at residues 45–65 (FVAYVLWSFALNFCSTFYQPI). Residues 66-86 (GFLTGYISHLSEFSPGEFLTS) are Extracellular-facing. A helical transmembrane segment spans residues 87–107 (LQVAFNAWSCSTKVLIVWALV). Residues 108–142 (KRFDEANNLLDEMDRRITDPGERLQIHRAVSLSNR) lie on the Cytoplasmic side of the membrane. The helical transmembrane segment at 143-163 (IFFFFMAVYMVYATNTFLSAI) threads the bilayer. Topologically, residues 164-181 (FIGRPPYQNYYPFLDWRS) are extracellular. The helical transmembrane segment at 182 to 202 (STLHLALQAGLEYFAMAGACF) threads the bilayer. Residues 203-271 (QDVCVDCYPV…DCLRPVISGT (69 aa)) lie on the Cytoplasmic side of the membrane. Residues 272 to 292 (IFVQFLVVGLVLGFTLINIVL) form a helical membrane-spanning segment. The Extracellular portion of the chain corresponds to 293–298 (FANLGS). The helical transmembrane segment at 299–319 (AIAALSFMAAVLLETTPFCIL) threads the bilayer. The Cytoplasmic portion of the chain corresponds to 320 to 359 (CNYLTEDCYKLADALFQSNWIDEEKRYQKTLMYFLQKLQQ). The helical transmembrane segment at 360-380 (PITFMAMNVFPISVGTNISVT) threads the bilayer. Topologically, residues 381–406 (KFSFSVFTLVKQMNISEKLAKSEMEE) are extracellular. An N-linked (GlcNAc...) asparagine glycan is attached at N394.

This sequence belongs to the insect chemoreceptor superfamily. Heteromeric odorant receptor channel (TC 1.A.69) family. Or2a subfamily. In terms of assembly, interacts with Orco. Complexes exist early in the endomembrane system in olfactory sensory neurons (OSNs), coupling these complexes to the conserved ciliary trafficking pathway.

The protein resides in the cell membrane. Its function is as follows. Odorant receptor which mediates acceptance or avoidance behavior, depending on its substrates. The odorant receptor repertoire encodes a large collection of odor stimuli that vary widely in identity, intensity, and duration. May form a complex with Orco to form odorant-sensing units, providing sensitive and prolonged odorant signaling and calcium permeability. Involved in the behavioral responses to butanol, ethyl acetate, propyl acetate, and pentyl acetate. Also responds to pyrazines. The sequence is that of Odorant receptor 42a (Or42a) from Drosophila melanogaster (Fruit fly).